Here is a 185-residue protein sequence, read N- to C-terminus: Hypoxanthine/guanine phosphoribosyltransferase (185 aa).

This sequence belongs to the purine/pyrimidine phosphoribosyltransferase family. Archaeal HPRT subfamily. As to quaternary structure, homodimer.

The protein localises to the cytoplasm. The catalysed reaction is IMP + diphosphate = hypoxanthine + 5-phospho-alpha-D-ribose 1-diphosphate. It carries out the reaction GMP + diphosphate = guanine + 5-phospho-alpha-D-ribose 1-diphosphate. It functions in the pathway purine metabolism; IMP biosynthesis via salvage pathway; IMP from hypoxanthine: step 1/1. In terms of biological role, catalyzes a salvage reaction resulting in the formation of IMP that is energically less costly than de novo synthesis. In Methanococcus maripaludis (strain C6 / ATCC BAA-1332), this protein is Hypoxanthine/guanine phosphoribosyltransferase.